The following is a 541-amino-acid chain: MRLSARGFVWSALLACTASALSEAAATASNSSQTLRTCVSQALVAGDVNTRIIDPSNDTYTDARLGEKIQFNEFPALIAYAKKAEEVASLVRCAQRSGFKAVPRSGGHHFEAWSALNGTLVIDLSHINHVNVSADTTTANVGAGIRQGALYLALDEHNVTFPGGICPTVALGGLVSSGGFSLQMRALGLAAEYVQSARVVLADGSLVTASSSSHEDLFWAIRGGGGGTYGIIVDFDLQLMQFPTSAMVAISWNASSDRYPVAQRFFDWAPVQIPAFTSQVNVYKSSINFLGQYLGGTENELRKLINESGLLNIGTPTVYISGNCDTDNSRLFGYTSYECVPANETNRQIMNVLPEPFSQYSDYPQYQYENEPEDPSIPIAEPWARFNRISKSFFMQKDNILPAADLKTVIDMMGQLDTDSEIWGEWHAWNISSATKADYAFPWREQAYAHLEFQVHGSLTNSTKQATYEKWFADLETYLRPKIGVASYSGEMDAHISTNPFESYYGDSVCRLVEVKKAYDPDNFFTNPDAITPTVPEGISC.

Residues 1–20 (MRLSARGFVWSALLACTASA) form the signal peptide. 10 N-linked (GlcNAc...) asparagine glycosylation sites follow: Asn-30, Asn-57, Asn-117, Asn-131, Asn-158, Asn-253, Asn-306, Asn-343, Asn-430, and Asn-461. In terms of domain architecture, FAD-binding PCMH-type spans 71-242 (FNEFPALIAY…VDFDLQLMQF (172 aa)).

Belongs to the oxygen-dependent FAD-linked oxidoreductase family. FAD serves as cofactor.

It functions in the pathway secondary metabolite biosynthesis. FAD-linked oxidoreductase; part of the gene cluster that mediates the biosynthesis of pyranonigrins, a family of antioxidative compounds. The first step of pyranonigrins biosynthesis is performed by the hybrid PKS-NRPS synthetase that condenses 6 malonyl-CoA units to an acetyl starter unit, to form a 1,3,5-trioxotetradecane-6,8-dienyl-ACP. The enoyl reductase (ER) domain of pynA is likely to be functional during the first two rounds of polyketide chain extension, to generate the saturated C-C bonds of the alkyl side chain. PynA subsequently forms the amide bond between the acyl chain and L-serine. Although pynA has a terminal reductase domain, it appears to require the thioesterase pynI for the release of the straight-chain intermediate from pynA via the formation of a tetramic acid pyranonigrin J. The methyltransferase pynC then coverts pyranonigrin J to pyranonigrin I via N-methylation. The FAD-dependent monooxygenase pynG catalyzes an epoxidation-mediated cyclization to form the dihydro-gamma-pyrone moiety, followed by pynD-catalyzed oxidation of the alcohol to the ketone and enolization to yield the characteristic tetramic acid-fused gamma-pyrone core of pyranonigrin H. Pyranonigrin H is substrate of pynH for dehydration-mediated exo-methylene formation from the serine side chain to produce pyranonigrin E, before the oxidase pynE reduces the exo-methylene of pyranonigrin E into a pendant methyl to form pyranonigrin G. The FAD-linked oxidoreductase pynB performs the reverse reaction and converts pyranonigrin G back to pyranonigrin E. This chain is FAD-linked oxidoreductase pynB, found in Aspergillus niger (strain ATCC MYA-4892 / CBS 513.88 / FGSC A1513).